The sequence spans 336 residues: Fructose-1,6-bisphosphatase class 1 (336 aa).

Residues glutamate 90, aspartate 112, leucine 114, and aspartate 115 each coordinate Mg(2+). Substrate contacts are provided by residues 115 to 118 (DGSS), asparagine 211, and lysine 277. Glutamate 283 serves as a coordination point for Mg(2+).

Belongs to the FBPase class 1 family. As to quaternary structure, homotetramer. The cofactor is Mg(2+).

The protein localises to the cytoplasm. It catalyses the reaction beta-D-fructose 1,6-bisphosphate + H2O = beta-D-fructose 6-phosphate + phosphate. Its pathway is carbohydrate biosynthesis; gluconeogenesis. The polypeptide is Fructose-1,6-bisphosphatase class 1 (Pseudomonas syringae pv. syringae (strain B728a)).